The following is a 353-amino-acid chain: Photosystem II protein D1 (353 aa).

N-acetylthreonine is present on T2. Position 2 is a phosphothreonine (T2). Helical transmembrane passes span 29-46 (YVGW…TAVS), 118-133 (HFFL…EWEL), and 142-156 (WIAV…AATA). Residue H118 participates in chlorophyll a binding. Residue Y126 participates in pheophytin a binding. The [CaMn4O5] cluster site is built by D170 and E189. Residues 197-218 (FHMLGVAGVFGGSLFSAMHGSL) traverse the membrane as a helical segment. H198 contacts chlorophyll a. Residues H215 and 264-265 (SF) contribute to the a quinone site. H215 lines the Fe cation pocket. H272 provides a ligand contact to Fe cation. A helical transmembrane segment spans residues 274–288 (FLAAWPVVGIWFTAL). Residues H332, E333, D342, and A344 each coordinate [CaMn4O5] cluster. Positions 345–353 (SVEAPSING) are excised as a propeptide.

Belongs to the reaction center PufL/M/PsbA/D family. PSII is composed of 1 copy each of membrane proteins PsbA, PsbB, PsbC, PsbD, PsbE, PsbF, PsbH, PsbI, PsbJ, PsbK, PsbL, PsbM, PsbT, PsbX, PsbY, PsbZ, Psb30/Ycf12, at least 3 peripheral proteins of the oxygen-evolving complex and a large number of cofactors. It forms dimeric complexes. The D1/D2 heterodimer binds P680, chlorophylls that are the primary electron donor of PSII, and subsequent electron acceptors. It shares a non-heme iron and each subunit binds pheophytin, quinone, additional chlorophylls, carotenoids and lipids. D1 provides most of the ligands for the Mn4-Ca-O5 cluster of the oxygen-evolving complex (OEC). There is also a Cl(-1) ion associated with D1 and D2, which is required for oxygen evolution. The PSII complex binds additional chlorophylls, carotenoids and specific lipids. serves as cofactor. In terms of processing, tyr-161 forms a radical intermediate that is referred to as redox-active TyrZ, YZ or Y-Z. Post-translationally, C-terminally processed by CTPA; processing is essential to allow assembly of the oxygen-evolving complex and thus photosynthetic growth.

Its subcellular location is the plastid. It localises to the chloroplast thylakoid membrane. The enzyme catalyses 2 a plastoquinone + 4 hnu + 2 H2O = 2 a plastoquinol + O2. Its function is as follows. Photosystem II (PSII) is a light-driven water:plastoquinone oxidoreductase that uses light energy to abstract electrons from H(2)O, generating O(2) and a proton gradient subsequently used for ATP formation. It consists of a core antenna complex that captures photons, and an electron transfer chain that converts photonic excitation into a charge separation. The D1/D2 (PsbA/PsbD) reaction center heterodimer binds P680, the primary electron donor of PSII as well as several subsequent electron acceptors. The polypeptide is Photosystem II protein D1 (Tupiella akineta (Green alga)).